The chain runs to 159 residues: D-aminoacyl-tRNA deacylase (159 aa).

Residues 146-147 (GP) carry the Gly-cisPro motif, important for rejection of L-amino acids motif.

It belongs to the DTD family. In terms of assembly, homodimer.

Its subcellular location is the cytoplasm. It catalyses the reaction glycyl-tRNA(Ala) + H2O = tRNA(Ala) + glycine + H(+). The enzyme catalyses a D-aminoacyl-tRNA + H2O = a tRNA + a D-alpha-amino acid + H(+). An aminoacyl-tRNA editing enzyme that deacylates mischarged D-aminoacyl-tRNAs. Also deacylates mischarged glycyl-tRNA(Ala), protecting cells against glycine mischarging by AlaRS. Acts via tRNA-based rather than protein-based catalysis; rejects L-amino acids rather than detecting D-amino acids in the active site. By recycling D-aminoacyl-tRNA to D-amino acids and free tRNA molecules, this enzyme counteracts the toxicity associated with the formation of D-aminoacyl-tRNA entities in vivo and helps enforce protein L-homochirality. The chain is D-aminoacyl-tRNA deacylase from Bifidobacterium animalis subsp. lactis (strain AD011).